We begin with the raw amino-acid sequence, 679 residues long: Shutoff protein (679 aa).

Positions 178–232 (LFDYLIGESQDPNDLDSEYKLAFTDEDLPQEGQAEKTKQRETLGAVATFGAVLLS) are binding to host EIF4G. The RRM domain maps to 235–353 (RLFTHPVVIK…ELAGANYAEA (119 aa)). Residues Tyr252 and Tyr564 each carry the phosphotyrosine; by host modification. The segment at 552–679 (REKSILKRGG…SLQGTRRESS (128 aa)) is disordered. Positions 661 to 679 (PRQETAEKESLQGTRRESS) are enriched in basic and acidic residues.

This sequence belongs to the adenoviridae shutoff protein family. Monomer. Interacts with hexon protein; this interaction allows chaperoning and trimerization of hexon proteins. Interacts (via N-terminus) with host initiation factor EIF4G (via C-terminus). Interacts (via RRM domain) with viral mRNAs that contain the tripartite leader; this interaction allows ribosome shunting and expression of viral late mRNAs. Might be cleaved by the viral protease. In terms of processing, phosphorylated. Tyrosine phosphorylation enhances preferential binding to tripartite leader mRNAs and allows ribosome shunting. Post-translationally, methylated. Asymmetric dimethylation by host PRMT1 of the Arg/Gly-rich region may regulate shutoff protein binding to hexon and promote the capsid assembly in the nucleus.

It localises to the host cytoplasm. Protein that inhibits host translation while promoting late viral translation by ribosome shunting. Blocks host cap-dependent translation by binding to eIF4G, displacing MKNK1 from cap initiation complexes and preventing EIF4E phosphorylation. Binds to the tripartite leader sequence of viral late mRNAs and recruits host eIF4G, PABPC1/poly-A binding protein and 40S ribosomes subunits on viral mRNAs, allowing ribosome shunting and efficient translation of late viral mRNAs even though conventional translation via ribosome scanning from the cap has been shut off in the host cell. During assembly, acts as a chaperone protein that helps hexon proteins assembly into trimers. This Snake adenovirus serotype 1 (SnAdV-1) protein is Shutoff protein.